The sequence spans 702 residues: Ribosomal RNA large subunit methyltransferase K/L (702 aa).

The THUMP domain maps to 43 to 154 (LVYQSLMWSR…KETASIALDL (112 aa)).

This sequence belongs to the methyltransferase superfamily. RlmKL family.

It localises to the cytoplasm. The catalysed reaction is guanosine(2445) in 23S rRNA + S-adenosyl-L-methionine = N(2)-methylguanosine(2445) in 23S rRNA + S-adenosyl-L-homocysteine + H(+). The enzyme catalyses guanosine(2069) in 23S rRNA + S-adenosyl-L-methionine = N(2)-methylguanosine(2069) in 23S rRNA + S-adenosyl-L-homocysteine + H(+). Functionally, specifically methylates the guanine in position 2445 (m2G2445) and the guanine in position 2069 (m7G2069) of 23S rRNA. The chain is Ribosomal RNA large subunit methyltransferase K/L from Escherichia coli O157:H7.